The primary structure comprises 183 residues: Caltractin ICL1c (183 aa).

The segment at 1 to 30 (MARRGQQPPPQQQQAPPTQKNQAGKFNPAE) is disordered. EF-hand domains are found at residues 39–74 (EEVL…LGFE), 75–110 (AKNQ…RISE), 112–147 (DSKA…LGET), and 148–183 (MDDS…KTFA). Ca(2+)-binding residues include D52, D54, T56, S58, E63, D88, D90, S92, Q94, and E99.

It belongs to the centrin family. Monomer.

Its subcellular location is the cytoplasm. It localises to the cytoskeleton. In terms of biological role, plays a fundamental role in microtubule organizing center structure and function. Component of the infraciliary lattice (ICL) and the ciliary basal bodies. The polypeptide is Caltractin ICL1c (Icl1c) (Paramecium tetraurelia).